Reading from the N-terminus, the 1391-residue chain is DNA-directed RNA polymerase subunit beta (1391 aa).

Belongs to the RNA polymerase beta chain family. In terms of assembly, the RNAP catalytic core consists of 2 alpha, 1 beta, 1 beta' and 1 omega subunit. When a sigma factor is associated with the core the holoenzyme is formed, which can initiate transcription.

It carries out the reaction RNA(n) + a ribonucleoside 5'-triphosphate = RNA(n+1) + diphosphate. In terms of biological role, DNA-dependent RNA polymerase catalyzes the transcription of DNA into RNA using the four ribonucleoside triphosphates as substrates. The protein is DNA-directed RNA polymerase subunit beta of Paramagnetospirillum magneticum (strain ATCC 700264 / AMB-1) (Magnetospirillum magneticum).